Reading from the N-terminus, the 2452-residue chain is Lovastatin diketide synthase lovF (2452 aa).

In terms of domain architecture, Ketosynthase family 3 (KS3) spans 10–381 (PAPIAVVGMG…GANAHAIVER (372 aa)). Residues Cys-173, His-308, and His-343 each act as for beta-ketoacyl synthase activity in the active site. The interval 496-790 (VFTGQGAQWF…PYLSCLSRGK (295 aa)) is malonyl-CoA:ACP transacylase (MAT) domain. Ser-555 serves as the catalytic For malonyltransferase activity. Residues 861–998 (HDLIGLQEPL…GLVRVDMDQP (138 aa)) form an N-terminal hotdog fold region. The interval 861–1166 (HDLIGLQEPL…LEGLVFQSLG (306 aa)) is dehydratase (DH) domain. The region spanning 861–1171 (HDLIGLQEPL…FQSLGASLGT (311 aa)) is the PKS/mFAS DH domain. Catalysis depends on His-893, which acts as the Proton acceptor; for dehydratase activity. A disordered region spans residues 997-1017 (QPASSLSNPQRADPRPWSRKT). The segment at 1012 to 1171 (PWSRKTAPQD…FQSLGASLGT (160 aa)) is C-terminal hotdog fold. The Proton donor; for dehydratase activity role is filled by Asp-1079. The tract at residues 1343 to 1528 (ELVRLCCHKN…RDCDSDEFYM (186 aa)) is methyltransferase (CMet) domain. The interval 1745 to 2064 (GLLDSLYFRK…SGQHVGKIVV (320 aa)) is enoylreductase (ER) domain. The segment at 2088 to 2260 (SYLVAGGLGG…AVTIDLGMVQ (173 aa)) is ketoreductase (KR) domain. One can recognise a Carrier domain in the interval 2373 to 2450 (ASIAVIMEAM…KVAEVVLQRY (78 aa)). Position 2410 is an O-(pantetheine 4'-phosphoryl)serine (Ser-2410).

As to quaternary structure, interacts with LovD. Pantetheine 4'-phosphate is required as a cofactor.

It catalyses the reaction holo-[2-methylbutanoate polyketide synthase] + 2 malonyl-CoA + S-adenosyl-L-methionine + 2 NADPH + 3 H(+) = (S)-2-methylbutanoyl-[2-methylbutanoate polyketide synthase] + S-adenosyl-L-homocysteine + 2 CO2 + 2 NADP(+) + 2 CoA + H2O. Its pathway is polyketide biosynthesis; lovastatin biosynthesis. Its function is as follows. Lovastatin diketide synthase; part of the gene cluster that mediates the biosynthesis of lovastatin (also known as mevinolin, mevacor or monacolin K), a hypolipidemic inhibitor of (3S)-hydroxymethylglutaryl-coenzyme A (HMG-CoA) reductase (HMGR). The first step in the biosynthesis of lovastatin is the production of dihydromonacolin L acid by the lovastatin nonaketide synthase lovB and the trans-acting enoyl reductase lovC via condensation of one acetyl-CoA unit and 8 malonyl-CoA units. Dihydromonacolin L acid is released from lovB by the thioesterase lovG. Next, dihydromonacolin L acid is oxidized by the dihydromonacolin L monooxygenase lovA twice to form monacolin J acid. The 2-methylbutyrate moiety of lovastatin is synthesized by the lovastatin diketide synthase lovF via condensation of one acetyl-CoA unit and one malonyl-CoA unit. Finally, the covalent attachment of this moiety to monacolin J acid is catalyzed by the transesterase lovD to yield lovastatin. LovD has broad substrate specificity and can also convert monacolin J to simvastatin using alpha-dimethylbutanoyl-S-methyl-3-mercaptopropionate (DMB-S-MMP) as the thioester acyl donor, and can also catalyze the reverse reaction and function as hydrolase in vitro. LovD has much higher activity with LovF-bound 2-methylbutanoate than with free diketide substrates. The polypeptide is Lovastatin diketide synthase lovF (Aspergillus terreus (strain NIH 2624 / FGSC A1156)).